The chain runs to 160 residues: Phosphopantetheine adenylyltransferase (160 aa).

Thr-11 contributes to the substrate binding site. Residues 11-12 and His-19 contribute to the ATP site; that span reads TF. 3 residues coordinate substrate: Lys-43, Thr-75, and Arg-89. ATP-binding positions include 90-92, Glu-100, and 125-131; these read GLR and YSFLSSS.

This sequence belongs to the bacterial CoaD family. As to quaternary structure, homohexamer. It depends on Mg(2+) as a cofactor.

The protein resides in the cytoplasm. It catalyses the reaction (R)-4'-phosphopantetheine + ATP + H(+) = 3'-dephospho-CoA + diphosphate. Its pathway is cofactor biosynthesis; coenzyme A biosynthesis; CoA from (R)-pantothenate: step 4/5. Functionally, reversibly transfers an adenylyl group from ATP to 4'-phosphopantetheine, yielding dephospho-CoA (dPCoA) and pyrophosphate. The polypeptide is Phosphopantetheine adenylyltransferase (Listeria monocytogenes serovar 1/2a (strain ATCC BAA-679 / EGD-e)).